A 222-amino-acid polypeptide reads, in one-letter code: Riboflavin kinase (222 aa).

The segment at 1–94 (METIDAEDAA…AKIFDVKDEQ (94 aa)) is H-T-H motif-like. Residues 95–222 (YVLTGTVMSG…ENSEVVVVIG (128 aa)) form a riboflavin kinase region. Residue 104 to 109 (GVGEGR) participates in CDP binding. Positions 133 and 135 each coordinate Mg(2+). Positions 190 and 198 each coordinate FMN. Residue 203–206 (TQLR) coordinates CDP.

This sequence belongs to the archaeal riboflavin kinase family. Requires Mg(2+) as cofactor.

The catalysed reaction is riboflavin + CTP = CDP + FMN + H(+). It functions in the pathway cofactor biosynthesis; FMN biosynthesis; FMN from riboflavin (CTP route): step 1/1. Catalyzes the CTP-dependent phosphorylation of riboflavin (vitamin B2) to form flavin mononucleotide (FMN). The chain is Riboflavin kinase (ribK) from Methanocorpusculum labreanum (strain ATCC 43576 / DSM 4855 / Z).